The sequence spans 8922 residues: Protein clarinet (8922 aa).

The interval Ser11–Ser35 is disordered. Over residues Val19–Gln28 the composition is skewed to acidic residues. Residues Lys385–Glu405 are a coiled coil. Disordered stretches follow at residues Gln527–Leu579, Ile622–Leu673, Leu687–Glu860, Ser880–Leu955, Glu971–Leu1049, Ser1062–Arg1139, Ile1151–Leu1331, Glu1347–Ser1420, Ser1444–Thr1520, Ser1538–Asp1619, Ser1632–Glu1710, Ser1726–Leu1801, Ser1820–Glu1898, Val1939–Glu1992, Ile2032–Thr2084, Ile2126–Pro2175, Gln2194–Leu2213, Ile2220–Asp2246, Ser2329–Glu2403, Ser2423–Leu2497, Ser2516–Glu2594, Ser2610–Glu2684, Ser2704–Phe2845, Ser2892–Lys2963, Glu2983–Leu3155, Glu3171–Leu3249, Ser3268–Leu3337, Ser3619–Asp3639, Ala3995–Ile4079, Ile4117–Thr4169, Ser4181–Ile4271, Gln4557–Glu4624, Glu4636–Leu4656, Ser4666–Ser4685, Glu4730–Gln4801, Pro4855–Asp4899, Pro5004–Thr5036, Leu5360–Ser5379, Arg5390–Leu5413, Lys5484–Val5511, Pro5540–Gly5572, Ala6194–Ser6303, Asp6354–Met6437, Ser6487–Ile6510, Ala6577–Leu6609, Asn6668–Arg6691, Ala6728–Gly6768, Thr6998–Ser7018, Ala7045–Asp7098, Phe7137–Pro7175, Glu7202–Arg7263, Lys7313–Glu7350, Asp7598–Met7623, Thr7760–Thr7797, and His7842–Val7881. Residues Ser531–Asp552 show a composition bias toward basic and acidic residues. The span at Met760 to Ala776 shows a compositional bias: basic and acidic residues. Low complexity predominate over residues Ser1062 to Pro1076. Residues Met1230–His1244 show a composition bias toward basic and acidic residues. Residues Ile1251 to Ser1261 are compositionally biased toward polar residues. 2 stretches are compositionally biased toward basic and acidic residues: residues Met1606 to Asp1619 and Met1700 to Glu1710. Composition is skewed to basic and acidic residues over residues Met1888 to Glu1898 and Met1982 to Glu1992. Polar residues predominate over residues Gln2194–Thr2204. The span at Met2584–Glu2594 shows a compositional bias: basic and acidic residues. Basic and acidic residues predominate over residues Met2772 to Ala2788. Residues Leu2793–Ser2803 show a composition bias toward polar residues. The segment covering Ala3076–Ser3085 has biased composition (polar residues). Polar residues predominate over residues Gly4035–Thr4044. Residues Pro4065–Ile4079 are compositionally biased toward basic and acidic residues. Composition is skewed to polar residues over residues Leu4182–Pro4195, Ser4223–Phe4234, and Met4255–Ile4271. The segment covering Ile4571–Ser4580 has biased composition (basic and acidic residues). A compositionally biased stretch (polar residues) spans Asn4581 to Gln4594. Residues Met4613 to Glu4624 are compositionally biased toward basic and acidic residues. Residues Glu4636 to Thr4645 show a composition bias toward polar residues. The span at Glu4730 to Thr4739 shows a compositional bias: polar residues. The span at Glu4871 to Ser4890 shows a compositional bias: low complexity. Over residues Glu5009–Thr5023 the composition is skewed to polar residues. Positions Arg5390–Arg5407 are enriched in low complexity. Over residues Gln5486–Ser5499 the composition is skewed to polar residues. Pro residues predominate over residues Pro5540–Pro5550. The span at Arg5560–Gly5572 shows a compositional bias: low complexity. 2 stretches are compositionally biased toward polar residues: residues Ala6225–Phe6245 and Lys6270–Arg6284. Composition is skewed to basic and acidic residues over residues Lys6285–Ser6303 and Gly6376–Leu6422. Polar residues predominate over residues Leu6494 to Ser6505. Positions Ser6590–Ser6600 are enriched in low complexity. A compositionally biased stretch (polar residues) spans Glu6670–Pro6687. Low complexity predominate over residues Ser6735–Ser6747. Composition is skewed to basic and acidic residues over residues Thr6998–Thr7008 and Ala7045–Glu7069. Low complexity predominate over residues Ser7071–Thr7086. The segment covering Thr7155–Pro7175 has biased composition (basic and acidic residues). The segment covering Ser7248–Tyr7260 has biased composition (acidic residues). Over residues Lys7313–Pro7331 the composition is skewed to low complexity. Positions Ser7599–Asn7609 are enriched in basic and acidic residues. Composition is skewed to low complexity over residues Ser7777–Ser7788 and Ala7854–Ser7880. A coiled-coil region spans residues Lys7895 to Glu7915. Residues Ser8510 to Glu8562 are disordered. Polar residues-rich tracts occupy residues Thr8517–Arg8530 and Ser8541–Met8551. Basic and acidic residues predominate over residues Pro8552–Glu8562. The region spanning Arg8570–Lys8661 is the PDZ domain. Residues Cys8714–Tyr8835 enclose the C2 domain.

In terms of tissue distribution, expressed in the nervous system.

The protein resides in the synapse. Its subcellular location is the cell projection. It localises to the axon. Functionally, required for synapse development in the active zone of presynaptic terminals of specific neurons including serotonergic NSM neurons. The active zone is a protein-dense neuronal region within the presynaptic bouton, from which synaptic vesicles send neurotransmitter signals across the synapse. Plays a role in the recruitment and clustering of synaptic vesicles in the active zone of presynaptic terminals in serotonergic NSM neurons, and coordinates the release of synaptic vesicles at presynaptic terminals to regulate neurotransmission at neuromuscular junctions. Regulates synapse number in inhibitory motor neurons and plays a role in spontaneous postsynaptic synaptic vesicle release in muscle cells. The chain is Protein clarinet from Caenorhabditis elegans.